We begin with the raw amino-acid sequence, 278 residues long: Large ribosomal subunit protein uL2 (278 aa).

The interval 222 to 278 (GVVMNPIDHPHGGGEGRTSGGRHPVTPWGKPTKGKKTRSNKSTDKFILISRHKRKKK) is disordered.

It belongs to the universal ribosomal protein uL2 family. Part of the 50S ribosomal subunit. Forms a bridge to the 30S subunit in the 70S ribosome.

In terms of biological role, one of the primary rRNA binding proteins. Required for association of the 30S and 50S subunits to form the 70S ribosome, for tRNA binding and peptide bond formation. It has been suggested to have peptidyltransferase activity; this is somewhat controversial. Makes several contacts with the 16S rRNA in the 70S ribosome. The chain is Large ribosomal subunit protein uL2 from Rhodopseudomonas palustris (strain ATCC BAA-98 / CGA009).